The following is a 78-amino-acid chain: Small venom protein 2 (78 aa).

The first 19 residues, 1 to 19 (MKFIVLLGALLALLVAVSA), serve as a signal peptide directing secretion. The propeptide occupies 20 to 42 (DRIAREAPEMESVDEAVLTRQAR).

In terms of tissue distribution, expressed by the venom gland.

The protein localises to the secreted. The protein is Small venom protein 2 of Pimpla hypochondriaca (Parasitoid wasp).